An 801-amino-acid chain; its full sequence is Disks large homolog 4 (801 aa).

Residues 4 to 60 (KREDTERALQAMEACQSAGDEGFRTRAERLLTIFQSDLFQALLDIQEFYELTVFENQ) form the L27 domain. 2 PDZ domains span residues 153-240 (EITL…LRHK) and 248-335 (ELKL…AKTL). Residues 339–373 (HHQDAYNPPDITSSYSPHMDMSDYPQALSPSSPRR) are disordered. Positions 393–474 (RVVIHRGSTG…TVTIITQYRP (82 aa)) constitute a PDZ 3 domain. An SH3 domain is found at 507–577 (KRSFFIRALF…PSKRRVERKE (71 aa)). In terms of domain architecture, Guanylate kinase-like spans 610–786 (ARPVIILGPS…IYHHVKSVIE (177 aa)).

This sequence belongs to the MAGUK family. In terms of processing, ubiquitinated by MDM2 in response to NMDA receptor activation, leading to proteasome-mediated degradation of DLG4 which is required for AMPA receptor endocytosis. Post-translationally, palmitoylated. Palmitoylation is required for targeting to postsynaptic density, plasma membrane and synapses.

It is found in the cell membrane. The protein resides in the postsynaptic density. It localises to the synapse. Postsynaptic scaffolding protein that plays a critical role in synaptogenesis and synaptic plasticity by providing a platform for the postsynaptic clustering of crucial synaptic proteins. The polypeptide is Disks large homolog 4 (dlg4) (Danio rerio (Zebrafish)).